The following is a 327-amino-acid chain: Phenylalanine--tRNA ligase alpha subunit (327 aa).

Glutamate 252 lines the Mg(2+) pocket.

Belongs to the class-II aminoacyl-tRNA synthetase family. Phe-tRNA synthetase alpha subunit type 1 subfamily. Tetramer of two alpha and two beta subunits. Mg(2+) serves as cofactor.

The protein localises to the cytoplasm. It carries out the reaction tRNA(Phe) + L-phenylalanine + ATP = L-phenylalanyl-tRNA(Phe) + AMP + diphosphate + H(+). In Shewanella frigidimarina (strain NCIMB 400), this protein is Phenylalanine--tRNA ligase alpha subunit.